Reading from the N-terminus, the 268-residue chain is 3-deoxy-manno-octulosonate cytidylyltransferase (268 aa).

This sequence belongs to the KdsB family.

It is found in the cytoplasm. The enzyme catalyses 3-deoxy-alpha-D-manno-oct-2-ulosonate + CTP = CMP-3-deoxy-beta-D-manno-octulosonate + diphosphate. It participates in nucleotide-sugar biosynthesis; CMP-3-deoxy-D-manno-octulosonate biosynthesis; CMP-3-deoxy-D-manno-octulosonate from 3-deoxy-D-manno-octulosonate and CTP: step 1/1. It functions in the pathway bacterial outer membrane biogenesis; lipopolysaccharide biosynthesis. Activates KDO (a required 8-carbon sugar) for incorporation into bacterial lipopolysaccharide in Gram-negative bacteria. This chain is 3-deoxy-manno-octulosonate cytidylyltransferase, found in Psychrobacter arcticus (strain DSM 17307 / VKM B-2377 / 273-4).